Reading from the N-terminus, the 361-residue chain is Aminomethyltransferase (361 aa).

The protein belongs to the GcvT family. The glycine cleavage system is composed of four proteins: P, T, L and H.

It catalyses the reaction N(6)-[(R)-S(8)-aminomethyldihydrolipoyl]-L-lysyl-[protein] + (6S)-5,6,7,8-tetrahydrofolate = N(6)-[(R)-dihydrolipoyl]-L-lysyl-[protein] + (6R)-5,10-methylene-5,6,7,8-tetrahydrofolate + NH4(+). In terms of biological role, the glycine cleavage system catalyzes the degradation of glycine. In Herpetosiphon aurantiacus (strain ATCC 23779 / DSM 785 / 114-95), this protein is Aminomethyltransferase.